Here is a 135-residue protein sequence, read N- to C-terminus: Hemoglobin subunit beta-2 (135 aa).

The region spanning 2 to 135 (HWTAEEKALV…VVDALSKGYH (134 aa)) is the Globin domain. Residues H57 and H81 each contribute to the heme b site.

Belongs to the globin family. Hb 2 is a heterotetramer of two alpha and two beta-2 chains. Red blood cells (at protein level).

Involved in oxygen transport from gills to the various peripheral tissues. This is Hemoglobin subunit beta-2 from Somniosus microcephalus (Greenland sleeper shark).